The primary structure comprises 205 residues: uncharacterized protein (205 aa).

The N-terminal stretch at Met-1–Ser-18 is a signal peptide.

This is an uncharacterized protein from Escherichia coli (strain K12).